A 607-amino-acid polypeptide reads, in one-letter code: Frizzled and smoothened-like protein J (607 aa).

Residues 1 to 26 (MVSNKNLLPIIYIFFIILYFGDVAKS) form the signal peptide. Residues 27–247 (QYFPLDKGAT…QWRNIYRLSD (221 aa)) are Extracellular-facing. The FZ domain maps to 32–182 (DKGATCQKYR…LSYTNTCENT (151 aa)). 3 cysteine pairs are disulfide-bonded: Cys37–Cys108, Cys50–Cys101, and Cys127–Cys179. Asn63, Asn133, Asn155, Asn164, Asn190, and Asn222 each carry an N-linked (GlcNAc...) asparagine glycan. A helical membrane pass occupies residues 248–268 (VLSILSCILTLFLVITLGIIN). The Cytoplasmic portion of the chain corresponds to 269 to 276 (PKVSRFDK). The chain crosses the membrane as a helical span at residues 277-297 (INVMLLSSIFLQAFSGALMTF). N-linked (GlcNAc...) asparagine glycosylation is present at Asn298. The Extracellular segment spans residues 298–330 (NGTENTLCPEDGRFASYIDRMCVATGFLLHGSS). Residues 331 to 351 (LLVVQWWCVLSFEVWFTIFQV) form a helical membrane-spanning segment. Topologically, residues 352 to 358 (GKKQKDR) are cytoplasmic. A helical transmembrane segment spans residues 359-379 (FIYYLVASLIIAWIPPIVSIS). Residues 380 to 401 (KNEYSGGPANPFCWLTTFNYRR) are Extracellular-facing. Residues 402–422 (FAFWLPMGIFLCLGGVFLILL) traverse the membrane as a helical segment. The Cytoplasmic portion of the chain corresponds to 423-451 (MREIYVIVSGNVQSTKESRFKVLKMEAKP). The chain crosses the membrane as a helical span at residues 452 to 472 (IISLIMYFSCLLYLFIYDQWI). The Extracellular segment spans residues 473-508 (NNHMHVYTDSIPSYALCLLTSTSTNDCLLKAPDITG). The helical transmembrane segment at 509 to 529 (LGYFIYSIRVFGVYAFIIYGI) threads the bilayer. The Cytoplasmic portion of the chain corresponds to 530-607 (SKKTLQIWKY…VELDSNSDAL (78 aa)). The Lys-Thr-X-X-X-Trp motif, mediates interaction with the PDZ domain of Dvl family members motif lies at 532-537 (KTLQIW). Residues 559-575 (TAKSSNSNNSSTTNNIS) show a composition bias toward low complexity. The interval 559–607 (TAKSSNSNNSSTTNNISVKASSNMEYETRQENENGDSQSVELDSNSDAL) is disordered. Residues 593 to 607 (GDSQSVELDSNSDAL) show a composition bias toward polar residues.

This sequence belongs to the G-protein coupled receptor Fz/Smo family.

The protein resides in the membrane. The chain is Frizzled and smoothened-like protein J (fslJ-1) from Dictyostelium discoideum (Social amoeba).